Here is a 935-residue protein sequence, read N- to C-terminus: Disintegrin and metalloproteinase domain-containing protein 22 (935 aa).

The signal sequence occupies residues 1 to 24; it reads MHINGGPLASWICCVIGSIHLAHA. The propeptide occupies 25–227; that stretch reads STRPENGGTS…QQTRSQRKKR (203 aa). N-linked (GlcNAc...) asparagine glycosylation is found at Asn167 and Asn210. The Extracellular segment spans residues 228–736; the sequence is QTRRYPRNVE…NRDEGVISTN (509 aa). In terms of domain architecture, Peptidase M12B spans 241-440; sequence KYVELMIVND…GGGACLFNKP (200 aa). Cystine bridges form between Cys351/Cys435, Cys394/Cys419, Cys396/Cys403, Cys449/Cys479, Cys460/Cys476, Cys462/Cys468, Cys475/Cys496, Cys487/Cys493, Cys492/Cys518, Cys505/Cys525, Cys512/Cys544, Cys537/Cys549, Cys556/Cys607, Cys571/Cys637, Cys585/Cys595, Cys602/Cys665, and Cys659/Cys670. Residues 446–533 enclose the Disintegrin domain; it reads PPECGNGFVE…QCPANIHKLD (88 aa). N-linked (GlcNAc...) asparagine glycosylation occurs at Asn521. 2 N-linked (GlcNAc...) asparagine glycosylation sites follow: Asn609 and Asn636. The N-linked (GlcNAc...) asparagine glycan is linked to Asn677. The EGF-like domain occupies 677–713; that stretch reads NFSTCLGSTNKICSGHGVCSNEVRCICDRFWTGEDCS. Cystine bridges form between Cys681–Cys695, Cys689–Cys701, and Cys703–Cys712. The helical transmembrane segment at 737–757 threads the bilayer; that stretch reads IIIGAIAGTILVLALVLGITA. The Cytoplasmic segment spans residues 758-935; that stretch reads WGYKNYRRER…QSARLWETSI (178 aa). The tract at residues 850-935 is disordered; that stretch reads VSDVCENGRP…QSARLWETSI (86 aa). The span at 859–870 shows a compositional bias: polar residues; the sequence is PRSNSWQGNVTS. Residues 871-882 show a composition bias toward basic residues; it reads SRKKLRGKRFRP. Positions 891–906 are enriched in low complexity; that stretch reads SPAKSPSSSTGSIASS.

The precursor is cleaved by a furin endopeptidase. In terms of tissue distribution, low levels in adult tissues. Not detected in developing embryos.

It is found in the cell membrane. In terms of biological role, probable ligand for integrin in the brain. This is a non catalytic metalloprotease-like protein. The polypeptide is Disintegrin and metalloproteinase domain-containing protein 22 (adam22) (Xenopus laevis (African clawed frog)).